Here is a 705-residue protein sequence, read N- to C-terminus: Polyribonucleotide nucleotidyltransferase (705 aa).

Mg(2+) is bound by residues aspartate 492 and aspartate 498. The region spanning 559–618 (PLMITMKVSPDKIRHIIGPGGKIINKIIDETGVEIDIDDDGSVYILAQDQESGNRAKEII) is the KH domain. The S1 motif domain occupies 628 to 696 (GDIYEGRVKK…ELGRINLSRK (69 aa)).

This sequence belongs to the polyribonucleotide nucleotidyltransferase family. The cofactor is Mg(2+).

Its subcellular location is the cytoplasm. The enzyme catalyses RNA(n+1) + phosphate = RNA(n) + a ribonucleoside 5'-diphosphate. In terms of biological role, involved in mRNA degradation. Catalyzes the phosphorolysis of single-stranded polyribonucleotides processively in the 3'- to 5'-direction. In Halothermothrix orenii (strain H 168 / OCM 544 / DSM 9562), this protein is Polyribonucleotide nucleotidyltransferase.